The sequence spans 445 residues: Cyclic GMP-AMP synthase-like receptor 1 (445 aa).

Mg(2+)-binding residues include E70, D72, and D186. E70 to D72 lines the ATP pocket. GTP contacts are provided by residues D186 and R232–E239. ATP-binding positions include Y236–E239, K257, and S270–K274. Residues L357–S445 form a disordered region. Residues Q377 to A398 are compositionally biased toward basic and acidic residues. A compositionally biased stretch (low complexity) spans T435–S445.

It belongs to the mab-21 family. Mg(2+) is required as a cofactor. Requires Mn(2+) as cofactor.

The enzyme catalyses GTP + ATP = 3',2'-cGAMP + 2 diphosphate. The catalysed reaction is GTP + ATP = pppA(2'-5')pG + diphosphate. It carries out the reaction pppA(2'-5')pG = 3',2'-cGAMP + diphosphate. The enzyme activity is specifically activated by double-stranded RNA (dsRNA). In terms of biological role, nucleotidyltransferase that catalyzes the formation of cyclic GMP-AMP (3',2'-cGAMP) from ATP and GTP and plays a key role in innate immunity. Synthesizes 3',2'-cGAMP in a two-step reaction through production of the linear intermediate pppA(2'-5')pG. Acts as a key sensor of double-stranded RNA (dsRNA), the presence of dsRNA in the cytoplasm being a danger signal that triggers the immune responses. Directly binds dsRNA, activating the nucleotidyltransferase activity, leading to synthesis of 3',2'-cGAMP, a second messenger that binds to and activates Sting, thereby triggering the antiviral immune response via activation of the NF-kappa-B transcription factor Rel (Relish). This is Cyclic GMP-AMP synthase-like receptor 1 from Drosophila erecta (Fruit fly).